Here is a 627-residue protein sequence, read N- to C-terminus: Coiled-coil domain-containing protein 22 (627 aa).

Residues 1–321 are sufficient for interaction with COMMD1; that stretch reads MEEADRILIH…VADIPAASQR (321 aa). Positions 1 to 447 are sufficicient and required for interaction with CCDC93; sequence MEEADRILIH…LQDCRELESS (447 aa). Residues 321–384 adopt a coiled-coil conformation; that stretch reads RPEQDTRAAQ…SVAEQEQALR (64 aa). Serine 410 carries the post-translational modification Phosphoserine. Residues 448 to 535 are a coiled coil; it reads RRLVEIQELH…NSLSGKLDRT (88 aa).

The protein belongs to the CCDC22 family. Component of the commander complex consisting of the CCC subcomplex and the retriever subcomplex. Component of the CCC (COMMD/CCDC22/CCDC93) subcomplex consisting of COMMD1, COMMD2, COMMD3, COMMD4, COMMD5, COMMD6, COMMD7, COMMD8, COMMD9, COMMD10, CCDC22 and CCDC93. Forms a coiled-coil heterodimer with CCDC22; this heterodimer interacts with the guanine nucleotide exchange factor DENND10; the interaction is direct. Interacts with CUL1, CUL2, CUL3, SKP1, BTRC. Interacts with SNX17 and SNX31. Interacts with CPNE1 and CPNE4.

The protein resides in the endosome. It localises to the cytoplasm. Its subcellular location is the cytoskeleton. The protein localises to the microtubule organizing center. It is found in the centrosome. Component of the commander complex that is essential for endosomal recycling of transmembrane cargos; the Commander complex is composed of composed of the CCC subcomplex and the retriever subcomplex. Component of the CCC complex, which is involved in the regulation of endosomal recycling of surface proteins, including integrins, signaling receptor and channels. Involved in regulation of NF-kappa-B signaling. Promotes ubiquitination of I-kappa-B-kinase subunit IKBKB and its subsequent proteasomal degradation leading to NF-kappa-B activation; the function may involve association with COMMD8 and a CUL1-dependent E3 ubiquitin ligase complex. May down-regulate NF-kappa-B activity via association with COMMD1 and involving a CUL2-dependent E3 ubiquitin ligase complex. Regulates the cellular localization of COMM domain-containing proteins, such as COMMD1 and COMMD10. Component of the CCC complex, which is involved in the regulation of endosomal recycling of surface proteins, including integrins, signaling receptor and channels. The CCC complex associates with SNX17, retriever and WASH complexes to prevent lysosomal degradation and promote cell surface recycling of numerous cargos such as integrins ITGA5:ITGB1. Plays a role in copper ion homeostasis. Involved in copper-dependent ATP7A trafficking between the trans-Golgi network and vesicles in the cell periphery; the function is proposed to depend on its association within the CCC complex and cooperation with the WASH complex on early endosomes. The sequence is that of Coiled-coil domain-containing protein 22 from Rattus norvegicus (Rat).